The sequence spans 142 residues: Large ribosomal subunit protein bL21 (142 aa).

Residues 73–84 (KRRRQNSKRTRG) show a composition bias toward basic residues. Positions 73–142 (KRRRQNSKRT…KAAAKAESAE (70 aa)) are disordered. Positions 107 to 125 (KAAEKKAPKADAAEGEAAK) are enriched in basic and acidic residues. A compositionally biased stretch (basic residues) spans 126–135 (PKKAAPKKAA).

It belongs to the bacterial ribosomal protein bL21 family. Part of the 50S ribosomal subunit. Contacts protein L20.

This protein binds to 23S rRNA in the presence of protein L20. The protein is Large ribosomal subunit protein bL21 of Brucella canis (strain ATCC 23365 / NCTC 10854 / RM-666).